Consider the following 137-residue polypeptide: Large ribosomal subunit protein uL16 (137 aa).

Residues Met1–His22 form a disordered region.

It belongs to the universal ribosomal protein uL16 family. Part of the 50S ribosomal subunit.

Functionally, binds 23S rRNA and is also seen to make contacts with the A and possibly P site tRNAs. The chain is Large ribosomal subunit protein uL16 from Saccharophagus degradans (strain 2-40 / ATCC 43961 / DSM 17024).